We begin with the raw amino-acid sequence, 189 residues long: Putative ankyrin repeat protein TV1425 (189 aa).

ANK repeat units lie at residues 31–60 (YNRT…KLED), 64–93 (EGST…NVNT), 97–126 (SGKT…NVND), and 130–159 (EGET…DISA).

This Thermoplasma volcanium (strain ATCC 51530 / DSM 4299 / JCM 9571 / NBRC 15438 / GSS1) protein is Putative ankyrin repeat protein TV1425.